Consider the following 117-residue polypeptide: Large ribosomal subunit protein bL20 (117 aa).

The protein belongs to the bacterial ribosomal protein bL20 family.

Binds directly to 23S ribosomal RNA and is necessary for the in vitro assembly process of the 50S ribosomal subunit. It is not involved in the protein synthesizing functions of that subunit. This is Large ribosomal subunit protein bL20 from Symbiobacterium thermophilum (strain DSM 24528 / JCM 14929 / IAM 14863 / T).